The chain runs to 114 residues: UPF0145 protein TTHA1944 (114 aa).

It belongs to the UPF0145 family.

This chain is UPF0145 protein TTHA1944, found in Thermus thermophilus (strain ATCC 27634 / DSM 579 / HB8).